Reading from the N-terminus, the 274-residue chain is Penicillin-insensitive murein endopeptidase (274 aa).

Positions methionine 1–alanine 19 are cleaved as a signal peptide. 3 disulfide bridges follow: cysteine 44/cysteine 265, cysteine 187/cysteine 235, and cysteine 216/cysteine 223. Positions 110, 113, 120, 147, 150, and 211 each coordinate Zn(2+). A disordered region spans residues glutamate 224 to proline 263. The span at proline 245–proline 263 shows a compositional bias: pro residues.

It belongs to the peptidase M74 family. Dimer. It depends on Zn(2+) as a cofactor.

It is found in the periplasm. In terms of biological role, murein endopeptidase that cleaves the D-alanyl-meso-2,6-diamino-pimelyl amide bond that connects peptidoglycan strands. Likely plays a role in the removal of murein from the sacculus. The protein is Penicillin-insensitive murein endopeptidase of Klebsiella pneumoniae subsp. pneumoniae (strain ATCC 700721 / MGH 78578).